Consider the following 96-residue polypeptide: uncharacterized protein (96 aa).

A helical transmembrane segment spans residues 1-21 (MSDFEIIVGISSLLQVIILNI).

Its subcellular location is the membrane. This is an uncharacterized protein from Saccharomyces cerevisiae (strain ATCC 204508 / S288c) (Baker's yeast).